An 855-amino-acid chain; its full sequence is Circadian locomoter output cycles protein kaput (855 aa).

A Nuclear localization signal motif is present at residues 32 to 47 (DKAKRVSRNKSEKKRR). The bHLH domain occupies 34–84 (AKRVSRNKSEKKRRDQFNVLIKELGSMLPGNARKMDKSTVLQKSIDFLRKH). Residues Ser38 and Ser42 each carry the phosphoserine modification. Residue Lys67 forms a Glycyl lysine isopeptide (Lys-Gly) (interchain with G-Cter in SUMO1) linkage. 2 PAS domains span residues 107 to 177 (NEEF…LLES) and 262 to 332 (FIKE…MQYG). The 44-residue stretch at 336-379 (SCYYRFLTKGQQWIWLQTHYYITYHQWNSRPEFIVCTHTVVSYA) folds into the PAC domain. The segment at 371–854 (CTHTVVSYAE…SLTDPSKVQP (484 aa)) is interaction with NR3C1. Disordered regions lie at residues 392–411 (EESL…SDNR) and 420–497 (ALER…LTQP). Residue Ser408 is modified to Phosphoserine. Position 427 is a phosphoserine; by GSK3-beta (Ser427). The residue at position 431 (Ser431) is a Phosphoserine. Polar residues predominate over residues 447 to 463 (DPSSTPTKIPTDTSTPP). The interaction with SIRT1 stretch occupies residues 450 to 570 (STPTKIPTDT…QGLQMFLQQS (121 aa)). A phosphothreonine; by CDK5 mark is found at Thr451 and Thr461. The segment covering 478 to 493 (SSFSSQSINSQSVGPS) has biased composition (low complexity). The interval 514–564 (FQFSAQLGAMQHLKDQLEQRTRMIEANIHRQQEELRKIQEQLQMVHGQGLQ) is implicated in the circadian rhythmicity. 3 disordered regions span residues 613–650 (TGQH…SQTP), 752–791 (QQQQ…GQPP), and 814–855 (AFPL…VQPQ). A compositionally biased stretch (low complexity) spans 619-650 (QQQTLQSTSTQQSQQSVMSGHSQQTSLPSQTP). The span at 818 to 837 (QQSTFPPSHHQQHQPQQQQQ) shows a compositional bias: low complexity. Positions 846–855 (LTDPSKVQPQ) are enriched in polar residues. A Glycyl lysine isopeptide (Lys-Gly) (interchain with G-Cter in SUMO1) cross-link involves residue Lys851.

In terms of assembly, component of the circadian clock oscillator which includes the CRY proteins, CLOCK or NPAS2, BMAL1 or BMAL2, CSNK1D and/or CSNK1E, TIMELESS and the PER proteins. Forms a heterodimer with BMAL1. The CLOCK-BMAL1 heterodimer is required for E-box-dependent transactivation, for CLOCK nuclear translocation and degradation, and for phosphorylation of both CLOCK and BMAL1. Interacts with NR3C1 in a ligand-dependent fashion. Interacts with ESR1 and estrogen stimulates this interaction. Interacts with the complex p35/CDK5. Interacts with RELA/p65. Interacts with KAT2B, CREBBP and EP300. Interacts with ID1 and ID3. Interacts with ID2. Interacts with MTA1. Interacts with OGA. Interacts with SIRT1. Interacts with CIPC. Interacts with EZH2. Interacts with EIF4E, PIWIL1 and DDX4. Interacts with PER1, PER2, CRY1 and CRY2 and this interaction requires a translocation to the nucleus. Interaction of the CLOCK-BMAL1 heterodimer with PER or CRY inhibits transcription activation. Interaction of the CLOCK-BMAL1 with CRY1 is independent of DNA but with PER2 is off DNA. The CLOCK-BMAL1 heterodimer interacts with GSK3B. Interacts with KDM5A. Interacts with KMT2A; in a circadian manner. Interacts with MYBBP1A. Interacts with THRAP3. Interacts with MED1; this interaction requires the presence of THRAP3. Interacts with NCOA2. The CLOCK-BMAL1 heterodimer interacts with PASD1. Interacts with NDUFA9. Interacts with IMPDH2; in a circadian manner. Interacts with ASS1; in a circadian manner. Interacts with PIWIL2 (via PIWI domain). Interacts with HNF4A. Ubiquitinated, leading to its proteasomal degradation. In terms of processing, O-glycosylated; contains O-GlcNAc. O-glycosylation by OGT prevents protein degradation by inhibiting ubiquitination. It also stabilizes the CLOCK-BMAL1 heterodimer thereby increasing CLOCK-BMAL1-mediated transcriptional activation of PER1/2/3 and CRY1/2. Post-translationally, phosphorylation is dependent on the CLOCK-BMAL1 heterodimer formation. Phosphorylation enhances the transcriptional activity, alters the subcellular localization and decreases the stability of the heterodimer by promoting its degradation. Phosphorylation shows circadian variations in the liver: the hyperphosphorylated form peaks at midnight (CT18), while the hypophosphorylated form is abundant throughout the day. May be phosphorylated by CSNK1D and CKSN1E. Sumoylation enhances its transcriptional activity and interaction with ESR1, resulting in up-regulation of ESR1 activity. Estrogen stimulates sumoylation. Desumoylation by SENP1 negatively regulates its transcriptional activity. In terms of processing, undergoes lysosome-mediated degradation in a time-dependent manner in the liver. In terms of tissue distribution, expressed equally in brain, eye, testes, ovaries, liver, heart, lung, kidney. In the brain, expression is abundant in the suprachiasmatic nuclei (SCN), in the pyriform cortex, and in the hippocampus. Low expression throughout the rest of the brain. Expression does not appear to undergo circadian oscillations.

The protein localises to the nucleus. Its subcellular location is the cytoplasm. It localises to the cytosol. It carries out the reaction L-lysyl-[protein] + acetyl-CoA = N(6)-acetyl-L-lysyl-[protein] + CoA + H(+). In terms of biological role, transcriptional activator which forms a core component of the circadian clock. The circadian clock, an internal time-keeping system, regulates various physiological processes through the generation of approximately 24 hour circadian rhythms in gene expression, which are translated into rhythms in metabolism and behavior. It is derived from the Latin roots 'circa' (about) and 'diem' (day) and acts as an important regulator of a wide array of physiological functions including metabolism, sleep, body temperature, blood pressure, endocrine, immune, cardiovascular, and renal function. Consists of two major components: the central clock, residing in the suprachiasmatic nucleus (SCN) of the brain, and the peripheral clocks that are present in nearly every tissue and organ system. Both the central and peripheral clocks can be reset by environmental cues, also known as Zeitgebers (German for 'timegivers'). The predominant Zeitgeber for the central clock is light, which is sensed by retina and signals directly to the SCN. The central clock entrains the peripheral clocks through neuronal and hormonal signals, body temperature and feeding-related cues, aligning all clocks with the external light/dark cycle. Circadian rhythms allow an organism to achieve temporal homeostasis with its environment at the molecular level by regulating gene expression to create a peak of protein expression once every 24 hours to control when a particular physiological process is most active with respect to the solar day. Transcription and translation of core clock components (CLOCK, NPAS2, BMAL1, BMAL2, PER1, PER2, PER3, CRY1 and CRY2) plays a critical role in rhythm generation, whereas delays imposed by post-translational modifications (PTMs) are important for determining the period (tau) of the rhythms (tau refers to the period of a rhythm and is the length, in time, of one complete cycle). A diurnal rhythm is synchronized with the day/night cycle, while the ultradian and infradian rhythms have a period shorter and longer than 24 hours, respectively. Disruptions in the circadian rhythms contribute to the pathology of cardiovascular diseases, cancer, metabolic syndromes and aging. A transcription/translation feedback loop (TTFL) forms the core of the molecular circadian clock mechanism. Transcription factors, CLOCK or NPAS2 and BMAL1 or BMAL2, form the positive limb of the feedback loop, act in the form of a heterodimer and activate the transcription of core clock genes and clock-controlled genes (involved in key metabolic processes), harboring E-box elements (5'-CACGTG-3') within their promoters. The core clock genes: PER1/2/3 and CRY1/2 which are transcriptional repressors form the negative limb of the feedback loop and interact with the CLOCK|NPAS2-BMAL1|BMAL2 heterodimer inhibiting its activity and thereby negatively regulating their own expression. This heterodimer also activates nuclear receptors NR1D1/2 and RORA/B/G, which form a second feedback loop and which activate and repress BMAL1 transcription, respectively. Regulates the circadian expression of ICAM1, VCAM1, CCL2, THPO and MPL and also acts as an enhancer of the transactivation potential of NF-kappaB. Plays an important role in the homeostatic regulation of sleep. The CLOCK-BMAL1 heterodimer regulates the circadian expression of SERPINE1/PAI1, VWF, B3, CCRN4L/NOC, NAMPT, DBP, MYOD1, PPARGC1A, PPARGC1B, SIRT1, GYS2, F7, NGFR, GNRHR, BHLHE40/DEC1, ATF4, MTA1, KLF10 and also genes implicated in glucose and lipid metabolism. Promotes rhythmic chromatin opening, regulating the DNA accessibility of other transcription factors. May play a role in spermatogenesis; contributes to the chromatoid body assembly and physiology. The CLOCK-BMAL2 heterodimer activates the transcription of SERPINE1/PAI1 and BHLHE40/DEC1. The preferred binding motif for the CLOCK-BMAL1 heterodimer is 5'-CACGTGA-3', which contains a flanking adenine nucleotide at the 3-prime end of the canonical 6-nucleotide E-box sequence. CLOCK specifically binds to the half-site 5'-CAC-3', while BMAL1 binds to the half-site 5'-GTGA-3'. The CLOCK-BMAL1 heterodimer also recognizes the non-canonical E-box motifs 5'-AACGTGA-3' and 5'-CATGTGA-3'. CLOCK has an intrinsic acetyltransferase activity, which enables circadian chromatin remodeling by acetylating histones and nonhistone proteins, including its own partner BMAL1. Represses glucocorticoid receptor NR3C1/GR-induced transcriptional activity by reducing the association of NR3C1/GR to glucocorticoid response elements (GREs) via the acetylation of multiple lysine residues located in its hinge region. The acetyltransferase activity of CLOCK is as important as its transcription activity in circadian control. Acetylates metabolic enzymes IMPDH2 and NDUFA9 in a circadian manner. Facilitated by BMAL1, rhythmically interacts and acetylates argininosuccinate synthase 1 (ASS1) leading to enzymatic inhibition of ASS1 as well as the circadian oscillation of arginine biosynthesis and subsequent ureagenesis. Drives the circadian rhythm of blood pressure through transcriptional activation of ATP1B1. This chain is Circadian locomoter output cycles protein kaput (Clock), found in Mus musculus (Mouse).